A 375-amino-acid chain; its full sequence is Sulfite efflux pump SSU1 (375 aa).

Topologically, residues 1-25 (MPSGSGFHNIEEAGEKARKRDDWIA) are cytoplasmic. Residues 26–46 (ISNFHPGWFSVNMGTGITAIL) traverse the membrane as a helical segment. The Extracellular segment spans residues 47–59 (LQNLPYQFPGLHY). A helical transmembrane segment spans residues 60-80 (IAVILFILNVIIFFLFLTISI). Residues 81–101 (TRYCLWPDKFKAMLAHPAHSM) are Cytoplasmic-facing. The chain crosses the membrane as a helical span at residues 102-122 (LLGTFPMGFATIINCIVFICV). The Extracellular portion of the chain corresponds to 123–135 (PVWGEWASRFAWG). A helical membrane pass occupies residues 136 to 156 (LWWIDAAVSVAICYFVPFMLM). Residues 157-167 (TKHTSSLETMT) lie on the Cytoplasmic side of the membrane. The helical transmembrane segment at 168-188 (AAWLLPIVAPVVAAASGGVVA) threads the bilayer. Topologically, residues 189-200 (DSLQNDTHALIT) are extracellular. N193 is a glycosylation site (N-linked (GlcNAc...) asparagine). Residues 201–221 (ILVCYVMWGSAVPLAMVILVI) traverse the membrane as a helical segment. The Cytoplasmic portion of the chain corresponds to 222-234 (YFQRLAIHKLVPR). A helical membrane pass occupies residues 235-255 (AAIVSALLPIGPLGQGGFGLM). Topologically, residues 256–277 (QLGVVAKRVFPRLDFLAPIAGD) are extracellular. The chain crosses the membrane as a helical span at residues 278–298 (IFYVMGAFIAMIMWGFGLIWL). Topologically, residues 299-309 (WFALASFTRGK) are cytoplasmic. A helical membrane pass occupies residues 310-330 (FYFNIGWWAFTFPLGVFTTAT). Over 331-343 (TQMGKEFNSPFFD) the chain is Extracellular. The chain crosses the membrane as a helical span at residues 344-364 (ILGTFFSIVVTCMWVLVFALT). Topologically, residues 365-375 (VYKSCTKELFR) are cytoplasmic.

This sequence belongs to the tellurite-resistance/dicarboxylate transporter (TDT) family.

The protein resides in the cell membrane. Its function is as follows. Sulphite efflux pump required for the secretion of sulphite as a reducing agent. In the presence of sulphite, cystine in keratin is directly cleaved to cysteine and S-sulphocysteine, and thereby, reduced proteins become accessible to hydrolysis by a variety of secreted endo- and exoproteases. Excretion of sulphite mediated by an efflux pump also represents a detoxification pathway for dermatophytes during infection of the epidermal stratum corneum, hair and nails, which are rich in cysteine. The protein is Sulfite efflux pump SSU1 of Arthroderma benhamiae (strain ATCC MYA-4681 / CBS 112371) (Trichophyton mentagrophytes).